Reading from the N-terminus, the 355-residue chain is Uroporphyrinogen decarboxylase (355 aa).

Substrate is bound by residues 27–31 (RQAGR), D77, Y154, T209, and H328.

Belongs to the uroporphyrinogen decarboxylase family. As to quaternary structure, homodimer.

It localises to the cytoplasm. The catalysed reaction is uroporphyrinogen III + 4 H(+) = coproporphyrinogen III + 4 CO2. It functions in the pathway porphyrin-containing compound metabolism; protoporphyrin-IX biosynthesis; coproporphyrinogen-III from 5-aminolevulinate: step 4/4. Catalyzes the decarboxylation of four acetate groups of uroporphyrinogen-III to yield coproporphyrinogen-III. The polypeptide is Uroporphyrinogen decarboxylase (Vibrio campbellii (strain ATCC BAA-1116)).